Here is an 805-residue protein sequence, read N- to C-terminus: ATP-dependent RNA helicase mak-5 (805 aa).

Residues 1–10 (MAVDKKRKNT) show a composition bias toward basic residues. 2 disordered regions span residues 1–33 (MAVDKKRKNTKAPASGPKRRKTQPSSKQIKRPV) and 79–189 (VPKS…ELET). The segment covering 85–100 (EVEDDGEEFGGFDDEE) has biased composition (acidic residues). Composition is skewed to basic and acidic residues over residues 110–119 (QEVKTSETKA), 126–143 (AKEKKASKDQRKPKEQQK), and 164–189 (KNAEDKKKARKNEKTTVEPKDPELET). Residues 209-237 (SEWVPLDLSPRMISSIAKLRFSKPTVIQS) carry the Q motif motif. Residues 240 to 463 (IPEIMAGHDV…AGKSKFKATS (224 aa)) enclose the Helicase ATP-binding domain. An ATP-binding site is contributed by 253–260 (ASTGSGKT). Positions 372–375 (DEAD) match the DEAD box motif. Basic and acidic residues predominate over residues 390 to 406 (FKALDRPPVEENNEDQK). The segment at 390–435 (FKALDRPPVEENNEDQKMGGTDEEGQEEEEEDSEEEEEEEEEHVNK) is disordered. The span at 410–431 (TDEEGQEEEEEDSEEEEEEEEE) shows a compositional bias: acidic residues. The 157-residue stretch at 510-666 (YLYATLMLQP…NSGNNTKKLV (157 aa)) folds into the Helicase C-terminal domain. The disordered stretch occupies residues 729 to 751 (AGKWGGKGSSKKQKQKEAQQMSK).

This sequence belongs to the DEAD box helicase family. DDX24/MAK5 subfamily.

It is found in the nucleus. It localises to the nucleolus. The enzyme catalyses ATP + H2O = ADP + phosphate + H(+). Functionally, ATP-binding RNA helicase involved in the biogenesis of 60S ribosomal subunits and is required for the normal formation of 25S and 5.8S rRNAs. The sequence is that of ATP-dependent RNA helicase mak-5 (mak-5) from Neurospora crassa (strain ATCC 24698 / 74-OR23-1A / CBS 708.71 / DSM 1257 / FGSC 987).